The following is a 66-amino-acid chain: Large ribosomal subunit protein bL33c (66 aa).

This sequence belongs to the bacterial ribosomal protein bL33 family.

Its subcellular location is the plastid. The protein localises to the chloroplast. The chain is Large ribosomal subunit protein bL33c from Citrus sinensis (Sweet orange).